The primary structure comprises 461 residues: Steroidogenic factor 1 (461 aa).

A DNA-binding region (nuclear receptor) is located at residues 10–85 (DELCPVCGDK…VGMRLEAVRA (76 aa)). The NR C4-type zinc-finger motif lies at 13–33 (CPVCGDKVSGYHYGLLTCESC). An N6-acetyllysine mark is found at Lys34, Lys38, and Lys72. The segment at 49–73 (CTESQSCKIDKTQRKRCPFCRFQKC) adopts an NR C4-type zinc-finger fold. Lys119 participates in a covalent cross-link: Glycyl lysine isopeptide (Lys-Gly) (interchain with G-Cter in SUMO). A disordered region spans residues 119–157 (KLETGPPMGVPPPPPPAPDYVLPPSLHGPEPKGLAAGPP). Residues 126–136 (MGVPPPPPPAP) show a composition bias toward pro residues. Lys194 participates in a covalent cross-link: Glycyl lysine isopeptide (Lys-Gly) (interchain with G-Cter in SUMO). Ser203 carries the phosphoserine; by CDK7 modification. One can recognise an NR LBD domain in the interval 222-459 (NVPELILQLL…NLLIEMLQAK (238 aa)). The important for dimerization stretch occupies residues 230-461 (LLQLEPDEDQ…LIEMLQAKQT (232 aa)). Residues Gly341, Tyr436, and Lys440 each coordinate a 1,2-diacyl-sn-glycero-3-phosphocholine. Gly341, Tyr436, and Lys440 together coordinate a 1,2-diacylglycero-3-phosphoethanolamine.

The protein belongs to the nuclear hormone receptor family. NR5 subfamily. Binds DNA as a monomer. Interacts with NR0B2 and PPARGC1A. Part of a complex consisting of SFPQ, NONO and NR5A1. Interacts with NCOA2. Interacts with DGKQ and CDK7. Binds to and activated by HIPK3. Post-translationally, acetylation stimulates the transcriptional activity. Sumoylation reduces CDK7-mediated phosphorylation on Ser-203. In terms of processing, phosphorylated on Ser-203 by CDK7. This phosphorylation promotes transcriptional activity. High expressed in the adrenal cortex, the ovary, the testis, and the spleen.

The protein localises to the nucleus. In terms of biological role, transcriptional activator. Essential for sexual differentiation and formation of the primary steroidogenic tissues. Binds to the Ad4 site found in the promoter region of steroidogenic P450 genes such as CYP11A, CYP11B and CYP21B. Also regulates the AMH/Muellerian inhibiting substance gene as well as the AHCH and STAR genes. 5'-YCAAGGYC-3' and 5'-RRAGGTCA-3' are the consensus sequences for the recognition by NR5A1. The SFPQ-NONO-NR5A1 complex binds to the CYP17 promoter and regulates basal and cAMP-dependent transcriptional activity. Binds phosphatidylcholine. Binds phospholipids with a phosphatidylinositol (PI) headgroup, in particular PI(3,4)P2 and PI(3,4,5)P3. Activated by the phosphorylation of NR5A1 by HIPK3 leading to increased steroidogenic gene expression upon cAMP signaling pathway stimulation. This is Steroidogenic factor 1 (NR5A1) from Homo sapiens (Human).